The chain runs to 881 residues: MEKAKLTKNLKLKIKNAQLTKAAGLDKLKQKLAQAGSSDTKNSSEKPSAKVAEKVVKKKSVVDPSVSATPESVSSETSPRRIRAKNRSSFVSEDLEVSSPVPVDSDTTSSMPPVEEEIASSTDSEPEVIEVTQPPIEEKSEVVTKVPPTPLKEPEVVVKKDPPKSVVGIKSNFGPTGKHINHLLAKTFKAPKKEDKPAPKERSGQAQAKPQQSSEASSENKPHSPNNNRSSQPFYRRDTSKKPGSDFRDRAKKDDNPKAFTGRDRYGLNDGSDDDKWRKKRVQKTKKHYDEHTIQRPTHIKVPLPITIKDLAAEMKLKASELIQKMFIHGMTYVVNDVLDNETTVQFIGLEFGCTIDIDSSEQDKLCIESNTVKEEIQETDPSKLIIRPPIVAFMGHVDHGKTTLIDSLRKSNIAAVEAGAITQHMGAFCCSTPVGNITILDTPGHEAFSAMRARGAEVCDIVVLVVAGDEGIKEQTLEAVKHARAANITIVVAINKCDKPNFNAETIYRQLSEINLLPEAWGGTTVTVNTSAKTGEGLPELLEMLALQAEVLELKANPSARARGIVIESELHKGLGAVATILVQNGTLHLGEALVFNDCYGKVKTMHDEHNRLMKVASPSVPALITGLSSMPKAGDPFVVVKNEKIAKDIIGARLAGQQKFALQKKRPNFDAMLQNKKILKLIIKADVQGSIEALASSILKIVSDKVSAEILSNSVGEISESDIRLAAASKAVIIGFHTGIESHAESLIKSLGVKVQLFNIIYHAVDAVKEMMTALLDPIAEEKNLGSAEIKETFKSSQLGTIYGCLVSEGVMTRNQKVRVVRNNDVLWKGTLSSLKRIKEDVKEVKKGLECGILLEGYQNAQVGDILQCYEVIYHPQKL.

Disordered stretches follow at residues 31 to 147 and 165 to 291; these read KLAQ…TKVP and SVVG…HYDE. A compositionally biased stretch (basic and acidic residues) spans 42-55; the sequence is NSSEKPSAKVAEKV. Positions 68-77 are enriched in polar residues; the sequence is ATPESVSSET. Over residues 114–128 the composition is skewed to acidic residues; it reads VEEEIASSTDSEPEV. Residues 191 to 203 show a composition bias toward basic and acidic residues; that stretch reads PKKEDKPAPKERS. Residues 204-233 show a composition bias toward polar residues; the sequence is GQAQAKPQQSSEASSENKPHSPNNNRSSQP. Residues 235–267 show a composition bias toward basic and acidic residues; that stretch reads YRRDTSKKPGSDFRDRAKKDDNPKAFTGRDRYG. The segment covering 278–287 has biased composition (basic residues); it reads RKKRVQKTKK. Positions 387–556 constitute a tr-type G domain; that stretch reads IRPPIVAFMG…ALQAEVLELK (170 aa). The segment at 396–403 is G1; sequence GHVDHGKT. Position 396–403 (396–403) interacts with GTP; the sequence is GHVDHGKT. The tract at residues 421–425 is G2; it reads AITQH. The interval 442-445 is G3; that stretch reads DTPG. GTP contacts are provided by residues 442–446 and 496–499; these read DTPGH and NKCD. A G4 region spans residues 496 to 499; sequence NKCD. Positions 532–534 are G5; sequence SAK.

The protein belongs to the TRAFAC class translation factor GTPase superfamily. Classic translation factor GTPase family. IF-2 subfamily.

The protein resides in the cytoplasm. In terms of biological role, one of the essential components for the initiation of protein synthesis. Protects formylmethionyl-tRNA from spontaneous hydrolysis and promotes its binding to the 30S ribosomal subunits. Also involved in the hydrolysis of GTP during the formation of the 70S ribosomal complex. This is Translation initiation factor IF-2 from Chlamydia felis (strain Fe/C-56) (Chlamydophila felis).